We begin with the raw amino-acid sequence, 491 residues long: Probable V-type proton ATPase subunit B 1 (491 aa).

Arg-380 is an ATP binding site.

The protein belongs to the ATPase alpha/beta chains family. V-ATPase is a heteromultimeric enzyme made up of two complexes: the ATP-hydrolytic V1 complex and the proton translocation V0 complex. The V1 complex consists of three catalytic AB heterodimers that form a heterohexamer, three peripheral stalks each consisting of EG heterodimers, one central rotor including subunits D and F, and the regulatory subunits C and H. The proton translocation complex V0 consists of the proton transport subunit a, a ring of proteolipid subunits c9c'', rotary subunit d, subunits e and f, and the accessory subunits vah-19/Ac45 and vah-20/PRR.

In terms of biological role, non-catalytic subunit of the V1 complex of vacuolar(H+)-ATPase (V-ATPase), a multisubunit enzyme composed of a peripheral complex (V1) that hydrolyzes ATP and a membrane integral complex (V0) that translocates protons. V-ATPase is responsible for acidifying and maintaining the pH of intracellular compartments and in some cell types, is targeted to the plasma membrane, where it is responsible for acidifying the extracellular environment. Essential for the proper assembly and activity of V-ATPase. Required maternally for early embryogenesis and zygotically during morphogenesis. Specifically, involved in the clearance of apoptotic cell corpses in embryos. Also, during embryonic development, the V-ATPase is required to repress fusion of epidermal cells probably by negatively regulating eff-1-mediated cell fusion. In neurons, required for necrotic cell death by promoting intracellular acidification. Required for cell death induced by hypoxia. Required for acidification of synaptic vesicles and the release of neurotransmitters from adult neurons. The chain is Probable V-type proton ATPase subunit B 1 from Caenorhabditis briggsae.